Here is a 342-residue protein sequence, read N- to C-terminus: MSAPGGPLARLEARLTREWQRRGALAWALTPFACVFGLCAALRRTAYAQGWKQPVDVGVPVVVVGNVTVGGTGKTPTVIALVDALRAAGFTPGVVSRGYGANVKAPTAVTPASRAGAAGDEPLLIARRTGAPVWVCPDRVAAAQALRAAHPDVDVIVSDDGLQHYRLARTVELVVFDHRLGGNGFLLPAGPLREPLSRHRDATLVNDPYSSALPPWPDTYALALTPGAAWHLDQPTLRRPLSQFANERVLAAAGIGAPERFFATLRAAGLAPATRALPDHYAFADNPFVDDAVDAILITEKDAVKLGASWRDARLWVVPVEAALDPRLIALVVEKLRGRSPA.

68–75 (TVGGTGKT) is a binding site for ATP.

It belongs to the LpxK family.

It carries out the reaction a lipid A disaccharide + ATP = a lipid IVA + ADP + H(+). It participates in glycolipid biosynthesis; lipid IV(A) biosynthesis; lipid IV(A) from (3R)-3-hydroxytetradecanoyl-[acyl-carrier-protein] and UDP-N-acetyl-alpha-D-glucosamine: step 6/6. Transfers the gamma-phosphate of ATP to the 4'-position of a tetraacyldisaccharide 1-phosphate intermediate (termed DS-1-P) to form tetraacyldisaccharide 1,4'-bis-phosphate (lipid IVA). The polypeptide is Tetraacyldisaccharide 4'-kinase (Burkholderia cenocepacia (strain ATCC BAA-245 / DSM 16553 / LMG 16656 / NCTC 13227 / J2315 / CF5610) (Burkholderia cepacia (strain J2315))).